The chain runs to 184 residues: Cell number regulator 5 (184 aa).

Residues 91–111 (MLWGLLTSLCCVFTGGLVLAV) form a helical membrane-spanning segment. Residues 162-184 (RTGSGSSPAPNVTPPPVQTMDEL) are disordered.

This sequence belongs to the cornifelin family. In terms of tissue distribution, expressed in roots, leaves, stalks, immature ears, endosperm and pollen.

It is found in the membrane. This chain is Cell number regulator 5 (CNR5), found in Zea mays (Maize).